The sequence spans 943 residues: TBC1 domain family member 2B (943 aa).

Residues Met-1 to Lys-29 form a disordered region. Polar residues predominate over residues Ser-10 to Val-22. The 98-residue stretch at Ser-32–Trp-129 folds into the PH domain. Positions Arg-315–Met-514 form a coiled coil. The 195-residue stretch at Gly-642 to Gly-836 folds into the Rab-GAP TBC domain.

Its subcellular location is the early endosome. In terms of biological role, GTPase-activating protein that plays a role in the early steps of endocytosis. The polypeptide is TBC1 domain family member 2B (tbc1d2b) (Xenopus tropicalis (Western clawed frog)).